A 664-amino-acid chain; its full sequence is Glycine--tRNA ligase beta subunit (664 aa).

This sequence belongs to the class-II aminoacyl-tRNA synthetase family. As to quaternary structure, tetramer of two alpha and two beta subunits.

It is found in the cytoplasm. The catalysed reaction is tRNA(Gly) + glycine + ATP = glycyl-tRNA(Gly) + AMP + diphosphate. This Rickettsia felis (strain ATCC VR-1525 / URRWXCal2) (Rickettsia azadi) protein is Glycine--tRNA ligase beta subunit.